Consider the following 348-residue polypeptide: Protein RecA (348 aa).

69–76 (GPESSGKT) serves as a coordination point for ATP.

Belongs to the RecA family.

The protein localises to the cytoplasm. Functionally, can catalyze the hydrolysis of ATP in the presence of single-stranded DNA, the ATP-dependent uptake of single-stranded DNA by duplex DNA, and the ATP-dependent hybridization of homologous single-stranded DNAs. It interacts with LexA causing its activation and leading to its autocatalytic cleavage. The polypeptide is Protein RecA (Gluconacetobacter polyoxogenes (Acetobacter polyoxogenes)).